The primary structure comprises 477 residues: MSSGRIVQIIGAVLDVEFNRNEVPRIYDALQVDGTETTLEVQQQLGDGIVRTIAMGSTEGLKRNLSVTNTGGPISVPVGVGTLGRIMDVLGRPIDEEGPVEADERWSIHREAPSYAEQSNSTELLETGIKVIDLLCPFAKGGKVGLFGGAGVGKTVNMMELINNIALKHEGLSVFAGVGERTREGNDFYHEMQEAGVVNTEDFSKSKVAMVYGQMNEPPGNRLRVALSGLTMAEYFRDTKDPATGKGRDVLLFVDNIYRYTLAGTEVSALLGRMPSAVGYQPTLAEEMGMLQERITSTQSGSITSVQAVYVPADDLTDPSPATTFAHLDATVVLSRDIASQGIYPAVDPLDSTSRQLDPLVIGEEHYNVARGVQEVLQRYKELKDIIAILGMDELSEEDKLVVYRARKIQRFLSQPFHVAEVFTGAPGKYVPLRDTIASFKAIIAGEYDSLPEQAFYMAGGIDEVVAKAEKMKSSAA.

Residue 148 to 155 (GGAGVGKT) participates in ATP binding.

It belongs to the ATPase alpha/beta chains family. F-type ATPases have 2 components, CF(1) - the catalytic core - and CF(0) - the membrane proton channel. CF(1) has five subunits: alpha(3), beta(3), gamma(1), delta(1), epsilon(1). CF(0) has three main subunits: a(1), b(2) and c(9-12). The alpha and beta chains form an alternating ring which encloses part of the gamma chain. CF(1) is attached to CF(0) by a central stalk formed by the gamma and epsilon chains, while a peripheral stalk is formed by the delta and b chains.

It is found in the cell inner membrane. The catalysed reaction is ATP + H2O + 4 H(+)(in) = ADP + phosphate + 5 H(+)(out). In terms of biological role, produces ATP from ADP in the presence of a proton gradient across the membrane. The catalytic sites are hosted primarily by the beta subunits. The sequence is that of ATP synthase subunit beta from Psychrobacter arcticus (strain DSM 17307 / VKM B-2377 / 273-4).